A 339-amino-acid chain; its full sequence is Cyclin-Y-like protein 1 (339 aa).

In terms of domain architecture, Cyclin N-terminal spans 181 to 263 (QLTAECAIVT…FLELLQFNIN (83 aa)).

The protein belongs to the cyclin family. Cyclin Y subfamily.

The protein resides in the cell membrane. In terms of biological role, key regulator of Wnt signaling implicated in various biological processes such as embryonic neurogenesis. In Danio rerio (Zebrafish), this protein is Cyclin-Y-like protein 1 (ccnyl1).